A 345-amino-acid chain; its full sequence is MKNFHIEYPDEGLREALIDKINNLTKPKGSLGVLEDLALQIGLIQQTLSPTLSHPHNVLFAADHGIVEEGVSKSPKEITWQQLSNFLHGGAGVNFLCRQHGFKLVLVDSGVDYDLPYEKGIINCSVGRGTHSFLKGPAMSMEEMELCLERGAKITDMIHADGCNVVSFGEMGIGNTSPSSVWMHLLTGISLEQCVGAGSGLDSEGIRHKYNVLKQSVDHYAGDGSAKDIIAWFGGYEMVMAIGGMLRAAELRMIILVDGFIMTNCILAASKLHPEVLSYAIFGHQGDETGHKLVLDAMKVRPLLNLGLRLGEGTGAICAYPIVVSSVNMMNEMDNFAHASITKYF.

The Proton acceptor role is filled by glutamate 312.

The protein belongs to the CobT family.

It carries out the reaction 5,6-dimethylbenzimidazole + nicotinate beta-D-ribonucleotide = alpha-ribazole 5'-phosphate + nicotinate + H(+). The protein operates within nucleoside biosynthesis; alpha-ribazole biosynthesis; alpha-ribazole from 5,6-dimethylbenzimidazole: step 1/2. Functionally, catalyzes the synthesis of alpha-ribazole-5'-phosphate from nicotinate mononucleotide (NAMN) and 5,6-dimethylbenzimidazole (DMB). This is Nicotinate-nucleotide--dimethylbenzimidazole phosphoribosyltransferase from Phocaeicola vulgatus (strain ATCC 8482 / DSM 1447 / JCM 5826 / CCUG 4940 / NBRC 14291 / NCTC 11154) (Bacteroides vulgatus).